The chain runs to 596 residues: Choline dehydrogenase, mitochondrial (596 aa).

Residues 1–34 (MWQVLRGWRKGWQSPRGALAWAVQGQPCPPCSRA) constitute a mitochondrion transit peptide. 44–73 (TFVVVGAGSAGCVLASRLTEDPNHRVLLLE) provides a ligand contact to FAD. Position 438 is an N6-succinyllysine (K438). N6-acetyllysine; alternate occurs at positions 486 and 498. 2 positions are modified to N6-succinyllysine; alternate: K486 and K498. Catalysis depends on H513, which acts as the Proton acceptor. N6-acetyllysine is present on K582.

Belongs to the GMC oxidoreductase family. The cofactor is FAD. Post-translationally, acetylation of Lys-498 is observed in liver mitochondria from fasted mice but not from fed mice.

The protein resides in the mitochondrion inner membrane. It carries out the reaction choline + A = betaine aldehyde + AH2. It participates in amine and polyamine biosynthesis; betaine biosynthesis via choline pathway; betaine aldehyde from choline (cytochrome c reductase route): step 1/1. The protein is Choline dehydrogenase, mitochondrial (Chdh) of Mus musculus (Mouse).